The following is a 157-amino-acid chain: Crossover junction endodeoxyribonuclease RuvC (157 aa).

Catalysis depends on residues Asp7, Glu67, and Asp139. The Mg(2+) site is built by Asp7, Glu67, and Asp139.

This sequence belongs to the RuvC family. Homodimer which binds Holliday junction (HJ) DNA. The HJ becomes 2-fold symmetrical on binding to RuvC with unstacked arms; it has a different conformation from HJ DNA in complex with RuvA. In the full resolvosome a probable DNA-RuvA(4)-RuvB(12)-RuvC(2) complex forms which resolves the HJ. Mg(2+) serves as cofactor.

The protein resides in the cytoplasm. It carries out the reaction Endonucleolytic cleavage at a junction such as a reciprocal single-stranded crossover between two homologous DNA duplexes (Holliday junction).. Its function is as follows. The RuvA-RuvB-RuvC complex processes Holliday junction (HJ) DNA during genetic recombination and DNA repair. Endonuclease that resolves HJ intermediates. Cleaves cruciform DNA by making single-stranded nicks across the HJ at symmetrical positions within the homologous arms, yielding a 5'-phosphate and a 3'-hydroxyl group; requires a central core of homology in the junction. The consensus cleavage sequence is 5'-(A/T)TT(C/G)-3'. Cleavage occurs on the 3'-side of the TT dinucleotide at the point of strand exchange. HJ branch migration catalyzed by RuvA-RuvB allows RuvC to scan DNA until it finds its consensus sequence, where it cleaves and resolves the cruciform DNA. This is Crossover junction endodeoxyribonuclease RuvC from Prochlorococcus marinus subsp. pastoris (strain CCMP1986 / NIES-2087 / MED4).